Consider the following 78-residue polypeptide: Transmembrane protein 258 (78 aa).

Residues 1-18 (MDVMQRYVSPVNPAVFPH) are Cytoplasmic-facing. Residues 19–39 (LATVLLVIGTFFTAWFFIFVV) traverse the membrane as a helical segment. Residues 40 to 53 (SRKSSKESTLIKEL) are Cytoplasmic-facing. The chain crosses the membrane as a helical span at residues 54–74 (LISLCASIFLGFGIVFLLLTV). Topologically, residues 75-78 (GIYV) are perinuclear space.

It belongs to the OST5 family. As to quaternary structure, homodimer. Component of the oligosaccharyltransferase (OST) complex. Interacts with klar and Msp300, components of LINC complex.

The protein localises to the nucleus outer membrane. It is found in the cytoplasm. The protein resides in the endoplasmic reticulum membrane. Its function is as follows. Subunit of the oligosaccharyl transferase (OST) complex that catalyzes the initial transfer of a defined glycan (Glc(3)Man(9)GlcNAc(2) in eukaryotes) from the lipid carrier dolichol-pyrophosphate to an asparagine residue within an Asn-X-Ser/Thr consensus motif in nascent polypeptide chains, the first step in protein N-glycosylation. N-glycosylation occurs cotranslationally and the complex associates with the Sec61 complex at the channel-forming translocon complex that mediates protein translocation across the endoplasmic reticulum (ER). All subunits are required for a maximal enzyme activity. In addition may regulates nuclear envelope (NE) architecture and nuclear positioning through the linker of nucleoskeleton and cytoskeleton (LINC)-dependent and -independent mechanisms. The polypeptide is Transmembrane protein 258 (Drosophila melanogaster (Fruit fly)).